The following is a 69-amino-acid chain: Putative membrane protein insertion efficiency factor (69 aa).

Belongs to the UPF0161 family.

Its subcellular location is the cell membrane. In terms of biological role, could be involved in insertion of integral membrane proteins into the membrane. The protein is Putative membrane protein insertion efficiency factor of Alkaliphilus metalliredigens (strain QYMF).